Consider the following 145-residue polypeptide: Deoxyuridine 5'-triphosphate nucleotidohydrolase (145 aa).

Substrate is bound by residues 62 to 64 (RSG), Asn75, 79 to 81 (TVD), and Lys89.

This sequence belongs to the dUTPase family. Requires Mg(2+) as cofactor.

It carries out the reaction dUTP + H2O = dUMP + diphosphate + H(+). It participates in pyrimidine metabolism; dUMP biosynthesis; dUMP from dCTP (dUTP route): step 2/2. In terms of biological role, this enzyme is involved in nucleotide metabolism: it produces dUMP, the immediate precursor of thymidine nucleotides and it decreases the intracellular concentration of dUTP so that uracil cannot be incorporated into DNA. This Helicobacter pylori (strain ATCC 700392 / 26695) (Campylobacter pylori) protein is Deoxyuridine 5'-triphosphate nucleotidohydrolase.